The sequence spans 878 residues: Leucine--tRNA ligase (878 aa).

The 'HIGH' region signature appears at 43-53 (PYPSGRIHMGH). Residues 630 to 634 (KMSKS) carry the 'KMSKS' region motif. Lys633 contacts ATP.

Belongs to the class-I aminoacyl-tRNA synthetase family.

The protein resides in the cytoplasm. The catalysed reaction is tRNA(Leu) + L-leucine + ATP = L-leucyl-tRNA(Leu) + AMP + diphosphate. In Rhodopseudomonas palustris (strain BisB5), this protein is Leucine--tRNA ligase.